Reading from the N-terminus, the 353-residue chain is Chorismate synthase (353 aa).

Arg-48 contacts NADP(+). FMN is bound by residues 125–127 (RSS), 238–239 (NA), Gly-278, 293–297 (KPTSS), and Arg-319.

This sequence belongs to the chorismate synthase family. As to quaternary structure, homotetramer. It depends on FMNH2 as a cofactor.

The enzyme catalyses 5-O-(1-carboxyvinyl)-3-phosphoshikimate = chorismate + phosphate. The protein operates within metabolic intermediate biosynthesis; chorismate biosynthesis; chorismate from D-erythrose 4-phosphate and phosphoenolpyruvate: step 7/7. In terms of biological role, catalyzes the anti-1,4-elimination of the C-3 phosphate and the C-6 proR hydrogen from 5-enolpyruvylshikimate-3-phosphate (EPSP) to yield chorismate, which is the branch point compound that serves as the starting substrate for the three terminal pathways of aromatic amino acid biosynthesis. This reaction introduces a second double bond into the aromatic ring system. This Buchnera aphidicola subsp. Cinara cedri (strain Cc) protein is Chorismate synthase.